The primary structure comprises 458 residues: Ammonium transporter Rh type B (458 aa).

Topologically, residues 1 to 13 are cytoplasmic; it reads MAGSPSRAAGRRL. The chain crosses the membrane as a helical span at residues 14 to 34; that stretch reads QLPLLCLFLQGATAVLFAVFV. Residues 35-61 lie on the Extracellular side of the membrane; it reads RYNHKTDAALWHRSNHSNADNEFYFRY. An N-linked (GlcNAc...) asparagine glycan is attached at Asn49. The helical transmembrane segment at 62-82 threads the bilayer; it reads PSFQDVHAMVFVGFGFLMVFL. Residues 83-86 are Cytoplasmic-facing; that stretch reads QRYG. Residues 87–107 traverse the membrane as a helical segment; sequence FSSVGFTFLLAAFALQWSTLV. Residues 108–124 are Extracellular-facing; the sequence is QGFLHSFHGGHIHVGVE. The chain crosses the membrane as a helical span at residues 125-145; that stretch reads SMINADFCAGAVLISFGAVLG. Over 146–149 the chain is Cytoplasmic; it reads KTGP. A helical membrane pass occupies residues 150–170; sequence AQLLLMALLEVVLFGINEFVL. Over 171–178 the chain is Extracellular; the sequence is LHLLGVRD. The chain crosses the membrane as a helical span at residues 179 to 201; the sequence is AGGSMTIHTFGAYFGLVLSRVLY. Topologically, residues 202-219 are cytoplasmic; sequence RPQLEKSKHRQGSVYHSD. Residues 220–240 traverse the membrane as a helical segment; it reads LFTMIGTIFLWIFWPSFNAAL. Residues 241–251 are Extracellular-facing; the sequence is TALGAGQHRTA. The helical transmembrane segment at 252-272 threads the bilayer; sequence LNTYYSLAASTLGTFALSALV. Over 273 to 282 the chain is Cytoplasmic; that stretch reads GEDGRLDMVH. A helical membrane pass occupies residues 283–303; sequence IQNAALTGGVVVGTSSKMMLT. Pro304 is a topological domain (extracellular). The helical transmembrane segment at 305-325 threads the bilayer; it reads FGALAAGFLAGTVSTLGYKFF. Residues 326 to 346 are Cytoplasmic-facing; the sequence is TPILESKFKVQDTCGVHNLHG. A helical transmembrane segment spans residues 347–367; sequence MPGVLGALLGVLVAGLATHEA. At 368-393 the chain is on the extracellular side; it reads YGDGLESVFPLIAEGQRSATSQAMHQ. The helical transmembrane segment at 394–414 threads the bilayer; the sequence is LFGLFVTLMFASVGGGLGGLL. The Cytoplasmic segment spans residues 415–458; sequence LKLPFLDSPPDSQCYEDQVHWQVPGEHEDKAQRPLRVEEADTYA. Residues 416-424 form an interaction with ANK3 region; that stretch reads KLPFLDSPP. Residues 429 to 432 carry the Basolateral sorting signal motif; sequence YEDQ. A disordered region spans residues 439–458; the sequence is GEHEDKAQRPLRVEEADTYA.

It belongs to the ammonium transporter (TC 2.A.49) family. Rh subfamily. As to quaternary structure, interacts (via C-terminus) with ANK2 and ANK3; required for targeting to the basolateral membrane. Post-translationally, N-glycosylated.

The protein resides in the cell membrane. It is found in the basolateral cell membrane. It catalyses the reaction NH4(+)(in) = NH4(+)(out). It carries out the reaction methylamine(out) = methylamine(in). The catalysed reaction is CO2(out) = CO2(in). Functionally, ammonium transporter involved in the maintenance of acid-base homeostasis. Transports ammonium and its related derivative methylammonium across the basolateral plasma membrane of epithelial cells likely contributing to renal transepithelial ammonia transport and ammonia metabolism. May transport either NH4(+) or NH3 ammonia species predominantly mediating an electrogenic NH4(+) transport. May act as a CO2 channel providing for renal acid secretion. This chain is Ammonium transporter Rh type B (RHBG), found in Gorilla gorilla gorilla (Western lowland gorilla).